The chain runs to 103 residues: Large ribosomal subunit protein uL24 (103 aa).

The protein belongs to the universal ribosomal protein uL24 family. Part of the 50S ribosomal subunit.

One of two assembly initiator proteins, it binds directly to the 5'-end of the 23S rRNA, where it nucleates assembly of the 50S subunit. Functionally, one of the proteins that surrounds the polypeptide exit tunnel on the outside of the subunit. The polypeptide is Large ribosomal subunit protein uL24 (Rhizobium meliloti (strain 1021) (Ensifer meliloti)).